The chain runs to 252 residues: Triosephosphate isomerase (252 aa).

A substrate-binding site is contributed by Asn-10–Lys-12. The Electrophile role is filled by His-96. Residue Glu-168 is the Proton acceptor of the active site. Residues Gly-174, Ser-214, and Gly-235–Gly-236 contribute to the substrate site.

Belongs to the triosephosphate isomerase family. Homodimer.

The protein localises to the cytoplasm. It catalyses the reaction D-glyceraldehyde 3-phosphate = dihydroxyacetone phosphate. Its pathway is carbohydrate biosynthesis; gluconeogenesis. The protein operates within carbohydrate degradation; glycolysis; D-glyceraldehyde 3-phosphate from glycerone phosphate: step 1/1. Involved in the gluconeogenesis. Catalyzes stereospecifically the conversion of dihydroxyacetone phosphate (DHAP) to D-glyceraldehyde-3-phosphate (G3P). In Streptococcus equi subsp. zooepidemicus (strain MGCS10565), this protein is Triosephosphate isomerase.